Consider the following 320-residue polypeptide: E3 ubiquitin-protein ligase RZF1 (320 aa).

An N-acetylserine modification is found at serine 2. Residues 186 to 227 form an RING-type; atypical zinc finger; it reads CPVCKDEFELKSEAKQMPCHHIYHSDCIVPWLVQHNSCPVCR. Residues 229–320 are disordered; sequence ELPSRGSSSS…MGYSGWPFDY (92 aa). 2 stretches are compositionally biased toward low complexity: residues 232–249 and 295–308; these read SRGS…STNG and QQQQ…QQQQ.

In terms of tissue distribution, expressed in seedlings and in flowers.

The enzyme catalyses S-ubiquitinyl-[E2 ubiquitin-conjugating enzyme]-L-cysteine + [acceptor protein]-L-lysine = [E2 ubiquitin-conjugating enzyme]-L-cysteine + N(6)-ubiquitinyl-[acceptor protein]-L-lysine.. E3 ubiquitin-protein ligase that promotes osmotic stress and abscisic acid (ABA) responses. Negatively regulates drought-mediated control of early seedling development, probably by influencing proline content, water loss, membrane ion leakage and the expression of dehydration stress-related genes (e.g. RAB18, RD29A, RD29B, AOX1A, ERD15, ERD1, COR15A, P5CS1 and P5CR). Modulates bZIP11 accumulation during rehydration following drought. This chain is E3 ubiquitin-protein ligase RZF1, found in Arabidopsis thaliana (Mouse-ear cress).